Here is a 352-residue protein sequence, read N- to C-terminus: Photosystem II D2 protein (352 aa).

N-acetylthreonine is present on T2. Position 2 is a phosphothreonine (T2). Residues 40–60 (CAYMALGGWLTGTTFVTSWYT) form a helical membrane-spanning segment. H117 is a chlorophyll a binding site. The helical transmembrane segment at 124 to 140 (GFMLRQFEIAQSLKLRP) threads the bilayer. Pheophytin a contacts are provided by Q129 and N142. A helical transmembrane segment spans residues 152-165 (VFVSVFLIYPLGQA). A chlorophyll a-binding site is contributed by H197. A helical membrane pass occupies residues 207-227 (AALLCAIHGATVENTLFEDGD). A plastoquinone-binding residues include H214 and F261. A Fe cation-binding site is contributed by H214. Residue H268 participates in Fe cation binding. Residues 278–294 (GLWMSAIGVVGLALNLR) traverse the membrane as a helical segment.

Belongs to the reaction center PufL/M/PsbA/D family. PSII is composed of 1 copy each of membrane proteins PsbA, PsbB, PsbC, PsbD, PsbE, PsbF, PsbH, PsbI, PsbJ, PsbK, PsbL, PsbM, PsbT, PsbX, PsbY, PsbZ, Psb30/Ycf12, at least 3 peripheral proteins of the oxygen-evolving complex and a large number of cofactors. It forms dimeric complexes. The cofactor is The D1/D2 heterodimer binds P680, chlorophylls that are the primary electron donor of PSII, and subsequent electron acceptors. It shares a non-heme iron and each subunit binds pheophytin, quinone, additional chlorophylls, carotenoids and lipids. There is also a Cl(-1) ion associated with D1 and D2, which is required for oxygen evolution. The PSII complex binds additional chlorophylls, carotenoids and specific lipids..

The protein resides in the plastid. The protein localises to the chloroplast thylakoid membrane. The catalysed reaction is 2 a plastoquinone + 4 hnu + 2 H2O = 2 a plastoquinol + O2. Its function is as follows. Photosystem II (PSII) is a light-driven water:plastoquinone oxidoreductase that uses light energy to abstract electrons from H(2)O, generating O(2) and a proton gradient subsequently used for ATP formation. It consists of a core antenna complex that captures photons, and an electron transfer chain that converts photonic excitation into a charge separation. The D1/D2 (PsbA/PsbD) reaction center heterodimer binds P680, the primary electron donor of PSII as well as several subsequent electron acceptors. D2 is needed for assembly of a stable PSII complex. This Stigeoclonium helveticum (Green alga) protein is Photosystem II D2 protein.